The chain runs to 310 residues: AA9 family lytic polysaccharide monooxygenase A (310 aa).

The first 21 residues, 1–21 (MPSTKVAALSAVLALASTVAG), serve as a signal peptide directing secretion. 2 residues coordinate Cu(2+): histidine 22 and histidine 107. Disulfide bonds link cysteine 77-cysteine 199 and cysteine 118-cysteine 122. 2 N-linked (GlcNAc...) asparagine glycosylation sites follow: asparagine 121 and asparagine 159. Histidine 185 is an O2 binding site. Tyrosine 196 contributes to the Cu(2+) binding site.

This sequence belongs to the polysaccharide monooxygenase AA9 family. Cu(2+) is required as a cofactor.

The protein localises to the secreted. It catalyses the reaction [(1-&gt;4)-beta-D-glucosyl]n+m + reduced acceptor + O2 = 4-dehydro-beta-D-glucosyl-[(1-&gt;4)-beta-D-glucosyl]n-1 + [(1-&gt;4)-beta-D-glucosyl]m + acceptor + H2O.. Functionally, lytic polysaccharide monooxygenase (LPMO) that depolymerizes crystalline and amorphous polysaccharides via the oxidation of scissile alpha- or beta-(1-4)-glycosidic bonds, yielding C1, C4 as well as C6 oxidation products. Catalysis by LPMOs requires the reduction of the active-site copper from Cu(II) to Cu(I) by a reducing agent and H(2)O(2) or O(2) as a cosubstrate. Active on cellulose, but not on xylan, starch, or chitin. This Talaromyces pinophilus (Penicillium pinophilum) protein is AA9 family lytic polysaccharide monooxygenase A.